The following is a 251-amino-acid chain: uncharacterized protein (251 aa).

This sequence belongs to the FAM243 family.

This is an uncharacterized protein from Homo sapiens (Human).